The following is an 88-amino-acid chain: Small ribosomal subunit protein bS20 (88 aa).

Positions 1–27 are disordered; the sequence is MANSKSAKKRALQSEKRRQHNASRRSM.

This sequence belongs to the bacterial ribosomal protein bS20 family.

Functionally, binds directly to 16S ribosomal RNA. The polypeptide is Small ribosomal subunit protein bS20 (Shewanella sp. (strain ANA-3)).